Reading from the N-terminus, the 232-residue chain is Enterobactin synthase component D (232 aa).

Mg(2+) contacts are provided by Asp-106, Glu-108, and Glu-150.

This sequence belongs to the P-Pant transferase superfamily. EntD family. In terms of assembly, entB, EntD, EntE, and EntF form a multienzyme complex called enterobactin synthase. Requires Mg(2+) as cofactor.

The protein localises to the membrane. The catalysed reaction is apo-[aryl-carrier protein] + CoA = holo-[aryl-carrier protein] + adenosine 3',5'-bisphosphate + H(+). The enzyme catalyses apo-[peptidyl-carrier protein] + CoA = holo-[peptidyl-carrier protein] + adenosine 3',5'-bisphosphate + H(+). Its pathway is siderophore biosynthesis; enterobactin biosynthesis. Functionally, involved in the biosynthesis of the siderophore enterobactin (enterochelin), which is a macrocyclic trimeric lactone of N-(2,3-dihydroxybenzoyl)-serine. The serine trilactone serves as a scaffolding for the three catechol functionalities that provide hexadentate coordination for the tightly ligated iron(2+) atoms. Plays an essential role in the assembly of the enterobactin by catalyzing the transfer of the 4'-phosphopantetheine (Ppant) moiety from coenzyme A to the apo-domains of both EntB (ArCP domain) and EntF (PCP domain) to yield their holo-forms which make them competent for the activation of 2,3-dihydroxybenzoate (DHB) and L-serine, respectively. This Salmonella austin protein is Enterobactin synthase component D.